A 191-amino-acid chain; its full sequence is Cell division protein SepF (191 aa).

A disordered region spans residues 150–191 (TSSSPEEASPSSVSPKNTPQYSVENNTAPEPAWGNSKLSAFS). Residues 151 to 164 (SSSPEEASPSSVSP) show a composition bias toward low complexity. Polar residues predominate over residues 165–177 (KNTPQYSVENNTA).

Belongs to the SepF family. In terms of assembly, homodimer. Interacts with FtsZ.

It localises to the cytoplasm. Its function is as follows. Cell division protein that is part of the divisome complex and is recruited early to the Z-ring. Probably stimulates Z-ring formation, perhaps through the cross-linking of FtsZ protofilaments. Its function overlaps with FtsA. In Prochlorococcus marinus (strain MIT 9312), this protein is Cell division protein SepF.